The primary structure comprises 374 residues: Translocating chain-associated membrane protein 1 (374 aa).

At 1-29 (MAIRKKSSKNPPVLSHEFVLQNHADIVSC) the chain is on the cytoplasmic side. A helical membrane pass occupies residues 30-50 (VAMVFLLGLMFEITAKVSIIF). The Lumenal portion of the chain corresponds to 51-81 (VTLQYNVTLPATEEQATESAFLYYYGIKDLA). Asn-56 carries an N-linked (GlcNAc...) asparagine glycan. Residues 82 to 102 (TVFFYMLVAIIIHAIIQEYVL) form a helical membrane-spanning segment. Topologically, residues 103–121 (DKINRRMHFSKTKHSKFNE) are cytoplasmic. A TLC domain is found at 117–326 (SKFNESGQLS…NFQLRRWREH (210 aa)). A helical transmembrane segment spans residues 122–142 (SGQLSAFYLFSCIWGTFILIS). Topologically, residues 143–159 (ENYISDPTILWRAYPHN) are lumenal. A helical transmembrane segment spans residues 160 to 180 (LMTFQMKFFYISQLAYWFHAF). The Cytoplasmic segment spans residues 181–192 (PELYFQKTKKED). The chain crosses the membrane as a helical span at residues 193–213 (IPRQLVYIGLYLFHIAGAYLL). Position 214 (Asn-214) is a topological domain, lumenal. The helical transmembrane segment at 215–235 (LNHLGLVLLVLHYFVEFLFHI) threads the bilayer. Residues 236–251 (SRLFYFSDEKYQKGFS) lie on the Cytoplasmic side of the membrane. Residues 252 to 272 (LWAVLFVLGRLLTLILSVLTV) form a helical membrane-spanning segment. At 273–297 (GFGLARAENQKLDFSTGNFNVLAVR) the chain is on the lumenal side. A helical membrane pass occupies residues 298–318 (IAVLASICITQAFMMWKFINF). Topologically, residues 319–374 (QLRRWREHSAFQAPAVKKKPPVTKGRSSRKGTENGVNGTVTSNGADSPRNRKEKSS) are cytoplasmic. A disordered region spans residues 331–374 (APAVKKKPPVTKGRSSRKGTENGVNGTVTSNGADSPRNRKEKSS). Residues 334-347 (VKKKPPVTKGRSSR) are compositionally biased toward basic residues. The span at 352–363 (NGVNGTVTSNGA) shows a compositional bias: polar residues. Ser-365 is subject to Phosphoserine.

This sequence belongs to the TRAM family. Interacts with SEC61B. May interact with Derlin-1/DERL1. In terms of processing, N-glycosylated.

The protein resides in the endoplasmic reticulum membrane. Functionally, involved in the translocation of nascent protein chains into or through the endoplasmic reticulum (ER) membrane by facilitating the proper chain positioning at the SEC61 channel. Regulates the exposure of nascent secretory protein chain to the cytosol during translocation into the ER. May affect the phospholipid bilayer in the vicinity of the lateral gate of the SEC61 channel, thereby facilitating ER protein transport. Intimately associates with transmembrane (TM) domain of nascent membrane proteins during the entire integration process into the ER membrane. Associates with the second TM domain of G-protein-coupled receptor opsin/OPSD nascent chain in the ER membrane, which may facilitate its integration into the membrane. Under conditions of ER stress, participates in the disposal of misfolded ER membrane proteins during the unfolded protein response (UPR), an integrated stress response (ISR) pathway, by selectively retrotranslocating misfolded ER-membrane proteins from the ER into the cytosol where they are ubiquitinated and degraded by the proteasome. The sequence is that of Translocating chain-associated membrane protein 1 (TRAM1) from Bos taurus (Bovine).